Reading from the N-terminus, the 64-residue chain is Prokaryotic ubiquitin-like protein Pup (64 aa).

A disordered region spans residues 1-32 (MNAKQTQIMGGGGRDEDNAEDSAQASGQVQIN). Residues 20-58 (EDSAQASGQVQINTEGVDSLLDEIDGLLENNAEEFVRSY) form an ARC ATPase binding region. Over residues 21–32 (DSAQASGQVQIN) the composition is skewed to polar residues. E64 participates in a covalent cross-link: Isoglutamyl lysine isopeptide (Glu-Lys) (interchain with K-? in acceptor proteins).

It belongs to the prokaryotic ubiquitin-like protein family. Strongly interacts with the proteasome-associated ATPase ARC through a hydrophobic interface; the interacting region of Pup lies in its C-terminal half. There is one Pup binding site per ARC hexamer ring.

It participates in protein degradation; proteasomal Pup-dependent pathway. Its function is as follows. Protein modifier that is covalently attached to lysine residues of substrate proteins, thereby targeting them for proteasomal degradation. The tagging system is termed pupylation. The protein is Prokaryotic ubiquitin-like protein Pup of Corynebacterium glutamicum (strain R).